Reading from the N-terminus, the 541-residue chain is NEDD8-activating enzyme E1 regulatory subunit (541 aa).

The protein belongs to the ubiquitin-activating E1 family. ULA1 subfamily. As to quaternary structure, heterodimer of uba-3 and ula-1. The complex binds NEDD8 and ubc-12.

It participates in protein modification; protein neddylation. Its function is as follows. Regulatory subunit of the dimeric uba-3-ula-1 E1 enzyme. E1 activates NEDD8 by first adenylating its C-terminal glycine residue with ATP, thereafter linking this residue to the side chain of the catalytic cysteine, yielding a NEDD8-rfl-1 (uba-3) thioester and free AMP. E1 finally transfers NEDD8 to the catalytic cysteine of ubc-12. Required for rfl-1 (uba-3) nuclear localization during early embryonic development. In Caenorhabditis elegans, this protein is NEDD8-activating enzyme E1 regulatory subunit (ula-1).